Reading from the N-terminus, the 463-residue chain is Adenylosuccinate synthetase, chloroplastic (463 aa).

Residues 44-50 and 72-74 contribute to the GTP site; these read GDEGKGK and GHT. The active-site Proton acceptor is Asp45. Residues Asp45 and Gly72 each coordinate Mg(2+). IMP is bound by residues 45-48, 70-73, Thr164, Arg178, Asn256, Thr271, and Arg335; these read DEGK and NAGH. His73 serves as the catalytic Proton donor. 331 to 337 contributes to the substrate binding site; the sequence is TTTGRPR. Residues Arg337, 363–365, and 446–448 contribute to the GTP site; these read KLD and GVG.

Belongs to the adenylosuccinate synthetase family. In terms of assembly, homodimer. The cofactor is Mg(2+).

The protein resides in the plastid. Its subcellular location is the chloroplast. The enzyme catalyses IMP + L-aspartate + GTP = N(6)-(1,2-dicarboxyethyl)-AMP + GDP + phosphate + 2 H(+). It functions in the pathway purine metabolism; AMP biosynthesis via de novo pathway; AMP from IMP: step 1/2. In terms of biological role, plays an important role in the de novo pathway and in the salvage pathway of purine nucleotide biosynthesis. Catalyzes the first committed step in the biosynthesis of AMP from IMP. The chain is Adenylosuccinate synthetase, chloroplastic from Chlamydomonas reinhardtii (Chlamydomonas smithii).